Reading from the N-terminus, the 87-residue chain is MAKEELIELNGIVDEVLPDSRYRVKLDNGIEVGAYASGRMRKHRIRILAGDRVTLEMSPYDLTKGRINFRHKDERSGPPSRPPQHRR.

Positions 1–72 constitute an S1-like domain; it reads MAKEELIELN…TKGRINFRHK (72 aa). Positions 66 to 87 are disordered; that stretch reads RINFRHKDERSGPPSRPPQHRR.

It belongs to the IF-1 family. As to quaternary structure, component of the 30S ribosomal translation pre-initiation complex which assembles on the 30S ribosome in the order IF-2 and IF-3, IF-1 and N-formylmethionyl-tRNA(fMet); mRNA recruitment can occur at any time during PIC assembly.

The protein localises to the cytoplasm. Its function is as follows. One of the essential components for the initiation of protein synthesis. Stabilizes the binding of IF-2 and IF-3 on the 30S subunit to which N-formylmethionyl-tRNA(fMet) subsequently binds. Helps modulate mRNA selection, yielding the 30S pre-initiation complex (PIC). Upon addition of the 50S ribosomal subunit IF-1, IF-2 and IF-3 are released leaving the mature 70S translation initiation complex. This Bordetella parapertussis (strain 12822 / ATCC BAA-587 / NCTC 13253) protein is Translation initiation factor IF-1 2.